The sequence spans 166 residues: Lipoprotein signal peptidase (166 aa).

A run of 4 helical transmembrane segments spans residues 11 to 31 (VWLW…TLVV), 42 to 62 (LLPV…SFLS), 67 to 87 (WQRW…VWWL), and 90 to 110 (LPAT…GAIG). Active-site residues include Asp123 and Asp141. The chain crosses the membrane as a helical span at residues 133 to 153 (HFPVFNVADCAICIGAALLLF).

It belongs to the peptidase A8 family.

It localises to the cell inner membrane. The enzyme catalyses Release of signal peptides from bacterial membrane prolipoproteins. Hydrolyzes -Xaa-Yaa-Zaa-|-(S,diacylglyceryl)Cys-, in which Xaa is hydrophobic (preferably Leu), and Yaa (Ala or Ser) and Zaa (Gly or Ala) have small, neutral side chains.. Its pathway is protein modification; lipoprotein biosynthesis (signal peptide cleavage). Its function is as follows. This protein specifically catalyzes the removal of signal peptides from prolipoproteins. The protein is Lipoprotein signal peptidase of Pseudoalteromonas translucida (strain TAC 125).